The sequence spans 765 residues: 5-methyltetrahydropteroyltriglutamate--homocysteine methyltransferase (765 aa).

Residues 16 to 19 (RELK) and lysine 121 each bind 5-methyltetrahydropteroyltri-L-glutamate. Residues 441–443 (IGS) and glutamate 494 each bind L-homocysteine. L-methionine is bound by residues 441–443 (IGS) and glutamate 494. Residues 525–526 (RC) and tryptophan 571 contribute to the 5-methyltetrahydropteroyltri-L-glutamate site. Aspartate 609 is an L-homocysteine binding site. An L-methionine-binding site is contributed by aspartate 609. 5-methyltetrahydropteroyltri-L-glutamate is bound at residue glutamate 615. Residues histidine 651, cysteine 653, and glutamate 675 each coordinate Zn(2+). Histidine 704 (proton donor) is an active-site residue. Cysteine 736 contributes to the Zn(2+) binding site.

Belongs to the vitamin-B12 independent methionine synthase family. It depends on Zn(2+) as a cofactor.

It catalyses the reaction 5-methyltetrahydropteroyltri-L-glutamate + L-homocysteine = tetrahydropteroyltri-L-glutamate + L-methionine. The protein operates within amino-acid biosynthesis; L-methionine biosynthesis via de novo pathway; L-methionine from L-homocysteine (MetE route): step 1/1. Functionally, catalyzes the transfer of a methyl group from 5-methyltetrahydrofolate to homocysteine resulting in methionine formation. This Saccharophagus degradans (strain 2-40 / ATCC 43961 / DSM 17024) protein is 5-methyltetrahydropteroyltriglutamate--homocysteine methyltransferase.